A 78-amino-acid chain; its full sequence is Protein GPR15LG (78 aa).

The N-terminal stretch at 1 to 24 (MRLLALSGLLCMLLLCFCIFSSEG) is a signal peptide. 2 cysteine pairs are disulfide-bonded: C37-C60 and C38-C57.

In terms of assembly, interacts with SUSD2; the interaction is direct. Highly abundant in the testis, colon, eye, and tongue. Detected in the epithelial layer of the colon, but not the small intestine.

Its subcellular location is the secreted. Functionally, highly cationic protein that has multiple functions. Acts as a chemotactic factor that mediates lymphocytes recruitment to epithelia through binding and activation of the G-protein coupled receptor GPR15. May be a tumor suppressor; together with SUSD2 has a growth inhibitory effect on colon cancer cells which includes G1 cell cycle arrest. May regulate keratinocyte proliferation. In addition, through activation of Mas-related G protein-coupled receptors (MRGPRs) contributes to pruritogenesis by activating itch-selective sensory neurons and mast cells degranulation. In terms of biological role, has antimicrobial activity against Gram-positive bacteria, including Staphylococcus aureus and Actinomyces spec., and Mycoplasma hominis and lentivirus. The chain is Protein GPR15LG (Gpr15lg) from Mus musculus (Mouse).